Reading from the N-terminus, the 159-residue chain is Transcriptional repressor NrdR (159 aa).

Residues 3-34 (CPFCRHDDTQVVDSRVSEDGAAIRRRRRCSAC) fold into a zinc finger. Residues 49-139 (PAVVKKDGSR…VYRRFEDVSE (91 aa)) form the ATP-cone domain.

It belongs to the NrdR family. Zn(2+) is required as a cofactor.

Negatively regulates transcription of bacterial ribonucleotide reductase nrd genes and operons by binding to NrdR-boxes. This Burkholderia cenocepacia (strain HI2424) protein is Transcriptional repressor NrdR.